Consider the following 112-residue polypeptide: NADH-quinone oxidoreductase subunit K (112 aa).

Helical transmembrane passes span 14–34 (LEGY…GALI), 39–59 (VVVF…LVAF), and 76–96 (LIIA…LAIF).

This sequence belongs to the complex I subunit 4L family. In terms of assembly, NDH-1 is composed of 14 different subunits. Subunits NuoA, H, J, K, L, M, N constitute the membrane sector of the complex.

It localises to the cell membrane. It carries out the reaction a quinone + NADH + 5 H(+)(in) = a quinol + NAD(+) + 4 H(+)(out). NDH-1 shuttles electrons from NADH, via FMN and iron-sulfur (Fe-S) centers, to quinones in the respiratory chain. The immediate electron acceptor for the enzyme in this species is believed to be a menaquinone. Couples the redox reaction to proton translocation (for every two electrons transferred, four hydrogen ions are translocated across the cytoplasmic membrane), and thus conserves the redox energy in a proton gradient. The chain is NADH-quinone oxidoreductase subunit K from Rubrobacter xylanophilus (strain DSM 9941 / JCM 11954 / NBRC 16129 / PRD-1).